The following is a 777-amino-acid chain: CRISPR system single-strand-specific deoxyribonuclease Cas10/Csm1 (subtype III-A) (777 aa).

One can recognise an HD domain in the interval 1-106; it reads MEIDELTALG…VYEADNLASG (106 aa). Residues 513-660 form the GGDEF domain; it reads RRLGVMKGDV…GRNRVFVVGR (148 aa).

The protein belongs to the CRISPR-associated Cas10/Csm1 family. In terms of assembly, probably part of the Csm effector complex, that includes Cas10, Csm2, Csm3, Csm4, Csm5 and mature crRNA. Will form a homodimer in solution, interacts with Csm4, which is a tighter, better association than the homodimeric Cas10 and uses the same interface for interaction. A divalent metal cation serves as cofactor.

Its activity is regulated as follows. ssDNase activity is inhibited by EDTA. CRISPR (clustered regularly interspaced short palindromic repeat) is an adaptive immune system that provides protection against mobile genetic elements (viruses, transposable elements and conjugative plasmids). CRISPR clusters contain spacers, sequences complementary to antecedent mobile elements, and target invading nucleic acids. CRISPR clusters are transcribed and processed into CRISPR RNA (crRNA). The type III-A Csm effector complex binds crRNA and acts as a crRNA-guided RNase, DNase and cyclic oligoadenylate synthase; binding of target RNA cognate to the crRNA is required for all activities. In terms of biological role, a single-strand deoxyribonuclease (ssDNase) which digests linear and circular ssDNA; has 5'-3' and 3'-5' exonuclease activity as well as a less efficient endonuclease activity. Has a minimal size requirement; 100 nucleotide ssDNA (nt) is more efficiently digested than 50 or 25 nt ssDNA, while 14 nt ssDNA is not cleaved at all. It has no activity on dsDNA or ssRNA. Functionally, ssDNase activity is stimulated in the ternary Csm effector complex; binding of cognate target RNA activates the ssDNase, as the target RNA is degraded ssDNA activity decreases. Its function is as follows. When associated with the ternary Csm effector complex (the crRNA, Cas proteins and a cognate target ssRNA) synthesizes cyclic oligoadenylates (cOA) from ATP. cOAs are second messengers that stimulate the ssRNase activity of Csm6, inducing an antiviral state important for defense against invading nucleic acids. In Thermococcus onnurineus (strain NA1), this protein is CRISPR system single-strand-specific deoxyribonuclease Cas10/Csm1 (subtype III-A).